A 517-amino-acid chain; its full sequence is Beta-glucosidase 17 (517 aa).

A signal peptide spans 1-23 (MAIKSIFIIIIISIITSISELYA). Residues Gln-54, His-158, and 203-204 (NE) each bind a beta-D-glucoside. The active-site Proton donor is the Glu-204. A disulfide bridge connects residues Cys-223 and Cys-230. An N-linked (GlcNAc...) asparagine glycan is attached at Asn-229. An a beta-D-glucoside-binding site is contributed by Tyr-346. Residues Asn-361 and Asn-371 are each glycosylated (N-linked (GlcNAc...) asparagine). A beta-D-glucoside is bound by residues Glu-417, Trp-466, 473–474 (EW), and Tyr-482. Glu-417 (nucleophile) is an active-site residue. Asn-510 is a glycosylation site (N-linked (GlcNAc...) asparagine).

Belongs to the glycosyl hydrolase 1 family.

The enzyme catalyses Hydrolysis of terminal, non-reducing beta-D-glucosyl residues with release of beta-D-glucose.. This chain is Beta-glucosidase 17, found in Arabidopsis thaliana (Mouse-ear cress).